We begin with the raw amino-acid sequence, 274 residues long: Thymidylate synthase (274 aa).

Arg21 is a binding site for dUMP. Position 51 (His51) interacts with (6R)-5,10-methylene-5,6,7,8-tetrahydrofolate. Arg123–Arg124 is a dUMP binding site. The Nucleophile role is filled by Cys156. Residues Arg176–Asp179, Asn187, and His217–Tyr219 contribute to the dUMP site. (6R)-5,10-methylene-5,6,7,8-tetrahydrofolate is bound at residue Asp179. Ala273 is a binding site for (6R)-5,10-methylene-5,6,7,8-tetrahydrofolate.

It belongs to the thymidylate synthase family. Bacterial-type ThyA subfamily. As to quaternary structure, homodimer.

It localises to the cytoplasm. It carries out the reaction dUMP + (6R)-5,10-methylene-5,6,7,8-tetrahydrofolate = 7,8-dihydrofolate + dTMP. It functions in the pathway pyrimidine metabolism; dTTP biosynthesis. Its function is as follows. Catalyzes the reductive methylation of 2'-deoxyuridine-5'-monophosphate (dUMP) to 2'-deoxythymidine-5'-monophosphate (dTMP) while utilizing 5,10-methylenetetrahydrofolate (mTHF) as the methyl donor and reductant in the reaction, yielding dihydrofolate (DHF) as a by-product. This enzymatic reaction provides an intracellular de novo source of dTMP, an essential precursor for DNA biosynthesis. The chain is Thymidylate synthase from Christiangramia forsetii (strain DSM 17595 / CGMCC 1.15422 / KT0803) (Gramella forsetii).